A 362-amino-acid polypeptide reads, in one-letter code: Phosphoserine aminotransferase (362 aa).

R43 serves as a coordination point for L-glutamate. Residues 77–78 (AT), W103, T153, D173, and Q196 contribute to the pyridoxal 5'-phosphate site. K197 carries the post-translational modification N6-(pyridoxal phosphate)lysine. A pyridoxal 5'-phosphate-binding site is contributed by 238-239 (NT).

It belongs to the class-V pyridoxal-phosphate-dependent aminotransferase family. SerC subfamily. As to quaternary structure, homodimer. Pyridoxal 5'-phosphate is required as a cofactor.

Its subcellular location is the cytoplasm. It catalyses the reaction O-phospho-L-serine + 2-oxoglutarate = 3-phosphooxypyruvate + L-glutamate. The enzyme catalyses 4-(phosphooxy)-L-threonine + 2-oxoglutarate = (R)-3-hydroxy-2-oxo-4-phosphooxybutanoate + L-glutamate. The protein operates within amino-acid biosynthesis; L-serine biosynthesis; L-serine from 3-phospho-D-glycerate: step 2/3. It functions in the pathway cofactor biosynthesis; pyridoxine 5'-phosphate biosynthesis; pyridoxine 5'-phosphate from D-erythrose 4-phosphate: step 3/5. Its function is as follows. Catalyzes the reversible conversion of 3-phosphohydroxypyruvate to phosphoserine and of 3-hydroxy-2-oxo-4-phosphonooxybutanoate to phosphohydroxythreonine. The polypeptide is Phosphoserine aminotransferase (Xylella fastidiosa (strain Temecula1 / ATCC 700964)).